Here is a 444-residue protein sequence, read N- to C-terminus: Chitinase-like protein Idgf1 (444 aa).

An N-terminal signal peptide occupies residues 1 to 20 (MTSLLFVILNIILTLHLCAG). Residues 29–444 (KRLICYYDAQ…PILRSVRGHL (416 aa)) enclose the GH18 domain. A disulfide bridge connects residues C33 and C60. 3 N-linked (GlcNAc...) asparagine glycosylation sites follow: N213, N225, and N335. C346 and C429 are oxidised to a cystine.

This sequence belongs to the glycosyl hydrolase 18 family. IDGF subfamily. Glycosylated.

It localises to the secreted. Cooperates with insulin-like peptides to stimulate the proliferation, polarization and motility of imaginal disk cells. May act by stabilizing the binding of insulin-like peptides to its receptor through a simultaneous interaction with both molecules to form a multiprotein signaling complex. The protein is Chitinase-like protein Idgf1 (Idgf1) of Glossina morsitans morsitans (Savannah tsetse fly).